The primary structure comprises 110 residues: MLEKTMRMNYLYDFYQALLTPKQRSYMSLYYLDDYSLGEIAQQYEVSRQAVYDNIKRTEAMLEEYEKKLSLFQKFQKRKQLMNQLKDYVLQKYGEDKQLFDMIKELEELE.

Belongs to the UPF0122 family.

Functionally, might take part in the signal recognition particle (SRP) pathway. This is inferred from the conservation of its genetic proximity to ftsY/ffh. May be a regulatory protein. The polypeptide is UPF0122 protein GWCH70_1086 (Geobacillus sp. (strain WCH70)).